A 208-amino-acid chain; its full sequence is Cytochrome c oxidase assembly protein CtaG (208 aa).

The Cytoplasmic segment spans residues 1–19 (MKQRPTGPDTTPRNRRGFG). The helical; Signal-anchor for type II membrane protein transmembrane segment at 20–42 (RDTAVASVCGLVVALMVGASYAA) threads the bilayer. At 43–208 (VPFYNWFCRV…SEAGPRQGAL (166 aa)) the chain is on the periplasmic side.

The protein belongs to the COX11/CtaG family.

It localises to the cell inner membrane. Its function is as follows. Exerts its effect at some terminal stage of cytochrome c oxidase synthesis, probably by being involved in the insertion of the copper B into subunit I. The polypeptide is Cytochrome c oxidase assembly protein CtaG (Rhodopseudomonas palustris (strain BisA53)).